A 1869-amino-acid chain; its full sequence is Chitin synthase csm1 (1869 aa).

The region spanning 1–778 (MAQHRCVGGN…CWMEIAQLSD (778 aa)) is the Myosin motor domain. ATP is bound at residue 103-110 (GESGSGKT). Asn-122, Asn-290, Asn-427, and Asn-558 each carry an N-linked (GlcNAc...) asparagine glycan. Residues 579–653 (HPQERTTVMQ…KPSEEGASGQ (75 aa)) form a disordered region. A compositionally biased stretch (polar residues) spans 583 to 593 (RTTVMQASVSS). The segment at 658–682 (LDNVTKSFHAQNTNAYFVFCLKPND) is actin-binding. Asn-660 carries N-linked (GlcNAc...) asparagine glycosylation. 2 helical membrane passes run 880–900 (WVFI…QHLG) and 919–939 (FIIW…PMLV). 3 N-linked (GlcNAc...) asparagine glycosylation sites follow: Asn-1029, Asn-1054, and Asn-1120. Residues 1191-1211 (FILAVTIILCSIIAFKFFAAL) form a helical membrane-spanning segment. 2 N-linked (GlcNAc...) asparagine glycosylation sites follow: Asn-1448 and Asn-1554. 3 helical membrane passes run 1579–1599 (FIVF…AYIV), 1612–1632 (VPVL…IIFI), and 1639–1659 (MIAW…GLPL). The region spanning 1811 to 1866 (LPSDDALLAEIREILRTADLMTVTKKGVKQELERRFGVNLDSRRAYINSATEALLS) is the DEK-C domain.

This sequence in the N-terminal section; belongs to the TRAFAC class myosin-kinesin ATPase superfamily. Myosin family. In the C-terminal section; belongs to the chitin synthase family. Class V subfamily.

The protein resides in the cell membrane. It is found in the cell septum. Its subcellular location is the cell tip. The catalysed reaction is [(1-&gt;4)-N-acetyl-beta-D-glucosaminyl](n) + UDP-N-acetyl-alpha-D-glucosamine = [(1-&gt;4)-N-acetyl-beta-D-glucosaminyl](n+1) + UDP + H(+). Polymerizes chitin, a structural polymer of the cell wall and septum, by transferring the sugar moiety of UDP-GlcNAc to the non-reducing end of the growing chitin polymer. Involved in mycelial growth. The protein is Chitin synthase csm1 of Pyricularia grisea (Crabgrass-specific blast fungus).